We begin with the raw amino-acid sequence, 558 residues long: 2-isopropylmalate synthase (558 aa).

The Pyruvate carboxyltransferase domain maps to 30–303; the sequence is PIWCSVDLRD…DPKLDCSDIE (274 aa). The Mg(2+) site is built by Asp39, His242, His244, and Asn278. The interval 437 to 558 is regulatory domain; that stretch reads QPGARIKFVD…ANRVLDVVGK (122 aa).

The protein belongs to the alpha-IPM synthase/homocitrate synthase family. LeuA type 2 subfamily. As to quaternary structure, homodimer. Mg(2+) is required as a cofactor.

It is found in the cytoplasm. It catalyses the reaction 3-methyl-2-oxobutanoate + acetyl-CoA + H2O = (2S)-2-isopropylmalate + CoA + H(+). The protein operates within amino-acid biosynthesis; L-leucine biosynthesis; L-leucine from 3-methyl-2-oxobutanoate: step 1/4. Its function is as follows. Catalyzes the condensation of the acetyl group of acetyl-CoA with 3-methyl-2-oxobutanoate (2-ketoisovalerate) to form 3-carboxy-3-hydroxy-4-methylpentanoate (2-isopropylmalate). This chain is 2-isopropylmalate synthase, found in Rhizobium meliloti (strain 1021) (Ensifer meliloti).